A 121-amino-acid chain; its full sequence is Large ribosomal subunit protein bL20 (121 aa).

Belongs to the bacterial ribosomal protein bL20 family.

Functionally, binds directly to 23S ribosomal RNA and is necessary for the in vitro assembly process of the 50S ribosomal subunit. It is not involved in the protein synthesizing functions of that subunit. The chain is Large ribosomal subunit protein bL20 from Chlamydia felis (strain Fe/C-56) (Chlamydophila felis).